A 380-amino-acid polypeptide reads, in one-letter code: Protein-tyrosine sulfotransferase A (380 aa).

The Cytoplasmic segment spans residues 1–6 (MRKNRE). Residues 7–27 (LLLVLFLVVFILFYFITARTA) form a helical; Signal-anchor for type II membrane protein membrane-spanning segment. The Lumenal portion of the chain corresponds to 28–380 (DDPYYSNHRE…PIVDNEVSKL (353 aa)). N66 carries N-linked (GlcNAc...) asparagine glycosylation. 79–83 (RSGTT) is a binding site for 3'-phosphoadenylyl sulfate. Residues C97 and C157 are joined by a disulfide bond. The Proton donor/acceptor role is filled by E100. Positions 102-106 (RVIPR) are interaction with peptide substrate. The 3'-phosphoadenylyl sulfate site is built by R184, S192, and R196. C226 and C234 form a disulfide bridge. Residues Y239, 284-293 (SSDQVVKPVN), and K299 each bind 3'-phosphoadenylyl sulfate.

This sequence belongs to the protein sulfotransferase family.

The protein localises to the golgi apparatus membrane. It carries out the reaction L-tyrosyl-[protein] + 3'-phosphoadenylyl sulfate = O-sulfo-L-tyrosine-[protein] + adenosine 3',5'-bisphosphate + H(+). Functionally, catalyzes the O-sulfation of tyrosine residues within acidic motifs of polypeptides, using 3'-phosphoadenylyl sulfate (PAPS) as cosubstrate. The chain is Protein-tyrosine sulfotransferase A (tpst-1) from Caenorhabditis elegans.